The sequence spans 232 residues: Large ribosomal subunit protein uL1 (232 aa).

Belongs to the universal ribosomal protein uL1 family. In terms of assembly, part of the 50S ribosomal subunit.

In terms of biological role, binds directly to 23S rRNA. The L1 stalk is quite mobile in the ribosome, and is involved in E site tRNA release. Its function is as follows. Protein L1 is also a translational repressor protein, it controls the translation of the L11 operon by binding to its mRNA. The protein is Large ribosomal subunit protein uL1 of Coxiella burnetii (strain CbuK_Q154) (Coxiella burnetii (strain Q154)).